Here is a 282-residue protein sequence, read N- to C-terminus: Heat stress transcription factor A-7b (282 aa).

Low complexity-rich tracts occupy residues 1 to 11 (MDPSSSSRARS) and 120 to 134 (SSSSPPSLNYSQSQP). Disordered regions lie at residues 1–24 (MDPSSSSRARSMPPPVPMEGLQEA) and 117–139 (RRTSSSSPPSLNYSQSQPEAHDP). A DNA-binding region spans residues 26–120 (PSPFLTKTFE…LLKSIKRRTS (95 aa)). The interval 137-196 (HDPGVELPQLREERHVLMMEISTLRQEEQRARGYVQAMEQRINGAEKKQRHMMSFLRRAV) is hydrophobic repeat HR-A/B. The short motif at 208–212 (QKRDR) is the Nuclear localization signal element. Residues 232–240 (LSELEALAL) carry the Nuclear export signal motif. The AHA signature appears at 259 to 268 (DGFWEELLMN).

This sequence belongs to the HSF family. Class A subfamily. As to quaternary structure, homotrimer. Post-translationally, exhibits temperature-dependent phosphorylation.

Its subcellular location is the cytoplasm. The protein localises to the nucleus. Functionally, transcriptional activator that specifically binds DNA sequence 5'-AGAAnnTTCT-3' known as heat shock promoter elements (HSE). The chain is Heat stress transcription factor A-7b (HSFA7B) from Arabidopsis thaliana (Mouse-ear cress).